The primary structure comprises 447 residues: Alpha-1,3-mannosyl-glycoprotein 2-beta-N-acetylglucosaminyltransferase (447 aa).

The Cytoplasmic segment spans residues 1-6 (MLKKQS). Residues 7–29 (AGLVLWGAIIFVGWNALLLLFFW) form a helical; Signal-anchor for type II membrane protein membrane-spanning segment. Residues 30-447 (TRPAPGRLPS…TWNGYDPSWN (418 aa)) are Lumenal-facing. C115 and C145 are joined by a disulfide. Residues R117, D144, H190, and D212 each contribute to the substrate site. D213 is a binding site for Mn(2+). A disulfide bridge links C239 with C305. The Proton acceptor role is filled by D291. Position 322 (S322) interacts with substrate.

The protein belongs to the glycosyltransferase 13 family. Interacts with MGAT4D. Interacts with BRI3. Requires Mn(2+) as cofactor. Appears to be present in all tissues.

The protein localises to the golgi apparatus membrane. It localises to the cytoplasm. It is found in the perinuclear region. It carries out the reaction N(4)-(alpha-D-Man-(1-&gt;3)-[alpha-D-Man-(1-&gt;3)-[alpha-D-Man-(1-&gt;6)]-alpha-D-Man-(1-&gt;6)]-beta-D-Man-(1-&gt;4)-beta-D-GlcNAc-(1-&gt;4)-beta-D-GlcNAc)-L-asparaginyl-[protein] (N-glucan mannose isomer 5A1,2) + UDP-N-acetyl-alpha-D-glucosamine = N(4)-{beta-D-GlcNAc-(1-&gt;2)-alpha-D-Man-(1-&gt;3)-[alpha-D-Man-(1-&gt;3)-[alpha-D-Man-(1-&gt;6)]-alpha-D-Man-(1-&gt;6)]-beta-D-Man-(1-&gt;4)-beta-D-GlcNAc-(1-&gt;4)-beta-D-GlcNAc}-L-asparaginyl-[protein] + UDP + H(+). It functions in the pathway protein modification; protein glycosylation. In terms of biological role, initiates complex N-linked carbohydrate formation. Essential for the conversion of high-mannose to hybrid and complex N-glycans. This is Alpha-1,3-mannosyl-glycoprotein 2-beta-N-acetylglucosaminyltransferase (Mgat1) from Rattus norvegicus (Rat).